Reading from the N-terminus, the 422-residue chain is MSTIGAVDILNQKTITSEVAASVTSKYLQSTFSKGNTSHIEDKRFIHVSSRSHSRFTSTPITPNEILSLKFHVSGSSMAYSRMDGSLTVWFIKDASFDKSVEVYIPDCCGSDKLATDLSWNPTSLNQIAVVSNSSEISLLLINEKSLTASKLRTLSLGSKTKVNTCLYDPLGNWLLAATKSEKIYLFDVKKDHSSVCSLNISDISQEDNDVVYSLAWSNGGSHIFIGFKSGYLAILKAKHGILEVCTKIKAHTGPITEIKMDPWGRNFITGSIDGNCYVWNMKSLCCELIINDLNSAVTTLDVCHLGKILGICTEDEMVYFYDLNSGNLLHSKSLANYKTDPVLKFYPDKSWYIMSGKNDTLSNHFVKNEKNLITYWKDMFDNTMIEKRRKNNGGGNNHNKRTSKNTDRIGKDRPSRFNSKK.

WD repeat units lie at residues 61–100 (ITPN…FDKS), 158–197 (GSKT…SSVC), 207–246 (EDND…LEVC), 251–290 (AHTG…CELI), and 293–332 (DLNS…LLHS). The interval 388–422 (KRRKNNGGGNNHNKRTSKNTDRIGKDRPSRFNSKK) is disordered. Basic and acidic residues predominate over residues 405–416 (KNTDRIGKDRPS).

The protein belongs to the THOC3 family. In terms of assembly, component of the transcription/export (TREX) complex and the THO complex.

It is found in the nucleus. Functionally, component of the TREX complex, which operates in coupling transcription elongation to mRNA export. The polypeptide is Protein TEX1 (TEX1) (Saccharomyces cerevisiae (strain ATCC 204508 / S288c) (Baker's yeast)).